Reading from the N-terminus, the 355-residue chain is Protein RecA (355 aa).

67–74 (GPESSGKT) lines the ATP pocket.

The protein belongs to the RecA family.

The protein localises to the cytoplasm. Functionally, can catalyze the hydrolysis of ATP in the presence of single-stranded DNA, the ATP-dependent uptake of single-stranded DNA by duplex DNA, and the ATP-dependent hybridization of homologous single-stranded DNAs. It interacts with LexA causing its activation and leading to its autocatalytic cleavage. The chain is Protein RecA from Shewanella piezotolerans (strain WP3 / JCM 13877).